We begin with the raw amino-acid sequence, 143 residues long: WW domain-containing protein C660.05 (143 aa).

A WW domain is found at 9–44; it reads GLPAGWVAQWDPTYQAYFYINETFEGAQPQWEPPIP. Residues 115–143 are disordered; the sequence is HHGPLHGPHGGFGGRGGGRMGGRGGRGRR.

This chain is WW domain-containing protein C660.05, found in Schizosaccharomyces pombe (strain 972 / ATCC 24843) (Fission yeast).